A 660-amino-acid polypeptide reads, in one-letter code: MEEEKASAAQSLIDVVNEIAAISDYRITVKKLCYNLARRLKLLVPMFEEIRESNEPISEDTLKTLMNLKEAMCSAKDYLKFCSQGSKIYLVMEREQVTSKLMEVSVKLEQSLSQIPYEELDISDEVREQVELVLSQFRRAKGRVDVSDDELYEDLQSLCNKSSDVDAYQPVLERVAKKLHLMEIPDLAQESVALHEMVASSGGDVGENIEEMAMVLKMIKDFVQTEDDNGEEQKVGVNSRSNGQTSTAASQKIPVIPDDFRCPISLEMMRDPVIVSSGQTYERTCIEKWIEGGHSTCPKTQQALTSTTLTPNYVLRSLIAQWCEANDIEPPKPPSSLRPRKVSSFSSPAEANKIEDLMWRLAYGNPEDQRSAAGEIRLLAKRNADNRVAIAEAGAIPLLVGLLSTPDSRIQEHSVTALLNLSICENNKGAIVSAGAIPGIVQVLKKGSMEARENAAATLFSLSVIDENKVTIGALGAIPPLVVLLNEGTQRGKKDAATALFNLCIYQGNKGKAIRAGVIPTLTRLLTEPGSGMVDEALAILAILSSHPEGKAIIGSSDAVPSLVEFIRTGSPRNRENAAAVLVHLCSGDPQHLVEAQKLGLMGPLIDLAGNGTDRGKRKAAQLLERISRLAEQQKETAVSQPEEEAEPTHPESTTEAADT.

The disordered stretch occupies residues 227–252; the sequence is DDNGEEQKVGVNSRSNGQTSTAASQK. Positions 236 to 250 are enriched in polar residues; that stretch reads GVNSRSNGQTSTAAS. In terms of domain architecture, U-box spans 255–329; it reads VIPDDFRCPI…AQWCEANDIE (75 aa). ARM repeat units follow at residues 384 to 423, 425 to 464, 466 to 505, 507 to 546, and 548 to 587; these read ADNR…NLSI, ENNK…SLSV, DENK…NLCI, QGNK…ILSS, and PEGK…HLCS. The segment at 631–660 is disordered; the sequence is AEQQKETAVSQPEEEAEPTHPESTTEAADT. A compositionally biased stretch (polar residues) spans 651-660; sequence PESTTEAADT.

As to quaternary structure, binds to SD11, SD16, SD17, SD18, SD113, SD129 and SD25. Phosphorylated by SD1-6 and SD1-7.

It localises to the nucleus. The protein localises to the cytoplasm. It catalyses the reaction S-ubiquitinyl-[E2 ubiquitin-conjugating enzyme]-L-cysteine + [acceptor protein]-L-lysine = [E2 ubiquitin-conjugating enzyme]-L-cysteine + N(6)-ubiquitinyl-[acceptor protein]-L-lysine.. It participates in protein modification; protein ubiquitination. Functions as an E3 ubiquitin ligase. In Arabidopsis thaliana (Mouse-ear cress), this protein is U-box domain-containing protein 13 (PUB13).